We begin with the raw amino-acid sequence, 580 residues long: Serine/threonine-protein kinase PINK1, mitochondrial (580 aa).

A mitochondrion-targeting transit peptide spans 1–77; that stretch reads MAVRQALGRG…RFFRQSVAGL (77 aa). Positions 28–60 are disordered; that stretch reads VSGWGKPGPGAAWGRGERPGRVSSPGAQPRPLG. A helical transmembrane segment spans residues 94–110; sequence GPCGRAVFLAFGLGLGL. A required for outer membrane localization region spans residues 111–117; it reads IEEKQAE. In terms of domain architecture, Protein kinase spans 156–510; it reads YLIGQAIGKG…IAANVLHLSL (355 aa). ATP-binding positions include 162–170 and K218; that span reads IGKGCNAAV. Position 227 is a phosphoserine; by autocatalysis (S227). The Proton acceptor role is filled by D361. S401 is subject to Phosphoserine; by autocatalysis.

This sequence belongs to the protein kinase superfamily. Ser/Thr protein kinase family. In terms of assembly, upon mitochondrial depolarization, it forms a supercomplex with TOM and TIM23 complexes. PINK1-TOM-TIM23 supercomplex formation requires PINK1 interaction with TOMM20 and TOMM70 and is critical for PINK1 stabilization at the outer mitochondrial membrane, kinase activation and downstream mitophagy. Upon mitochondrial depolarization, interacts with TIMM23; the interaction is required for PINK1 accumulation at the outer mitochondrial membrane, kinase activation by autophosphorylation and PRKN recruitement to mitochondria. Interacts with PRKN. Interacts with FBXO7. Forms a complex with PRKN and PARK7. Interacts with NENF. It depends on Mg(2+) as a cofactor. Post-translationally, proteolytically cleaved. In healthy cells, the precursor is continuously imported into the inner mitochondrial membrane (IMM), where it is proteolytically cleaved by mitochondrial-processing peptidase (MPP) and then undergoes further proteolytic cleavage by PARL or AFG3L2 to give rise to the 52 kDa short form. The 52 kDa short form is then released into the cytosol where it rapidly undergoes proteasome-dependent degradation. In unhealthy cells, when cellular stress conditions lead to the loss of mitochondrial membrane potential, mitochondrial import is impaired leading to the precursor accumulating on the outer mitochondrial membrane (OMM). If accumulation at the OMM fails and it is imported into the depolarized mitochondria, it undergoes cleavage by the IMM protease OMA1, promoting its subsequent degradation by the proteasome. Autophosphorylated. Loss of mitochondrial membrane potential results in the precursor accumulating on the outer mitochondrial membrane (OMM) where it is activated by autophosphorylation. Autophosphorylation at Ser-227 and Ser-401 is sufficient and essential for selective recruitment of PRKN to depolarized mitochondria, via PINK1-dependent phosphorylation of ubiquitin and maybe PRKN.

It is found in the mitochondrion outer membrane. Its subcellular location is the mitochondrion inner membrane. The protein resides in the cytoplasm. It localises to the cytosol. It catalyses the reaction L-seryl-[protein] + ATP = O-phospho-L-seryl-[protein] + ADP + H(+). It carries out the reaction L-threonyl-[protein] + ATP = O-phospho-L-threonyl-[protein] + ADP + H(+). In terms of biological role, serine/threonine-protein kinase which acts as a sensor of mitochondrial damage and protects against mitochondrial dysfunction during cellular stress. It phosphorylates mitochondrial proteins to coordinate mitochondrial quality control mechanisms that remove and replace dysfunctional mitochondrial components. Depending on the severity of mitochondrial damage, activity ranges from preventing apoptosis and stimulating mitochondrial biogenesis to eliminating severely damaged mitochondria via PINK1-PRKN-dependent mitophagy. When cellular stress results in irreversible mitochondrial damage, PINK1 accumulates at the outer mitochondrial membrane (OMM) where it phosphorylates pre-existing polyubiquitin chains at 'Ser-65', recruits PRKN from the cytosol to the OMM and activates PRKN by phosphorylation at 'Ser-65'; activated PRKN then ubiquinates VDAC1 and other OMM proteins to initiate mitophagy. The PINK1-PRKN pathway also promotes fission of damaged mitochondria through phosphorylation and PRKN-dependent degradation of mitochondrial proteins involved in fission such as MFN2. This prevents the refusion of unhealthy mitochondria with the mitochondrial network or initiates mitochondrial fragmentation facilitating their later engulfment by autophagosomes. Also promotes mitochondrial fission independently of PRKN and ATG7-mediated mitophagy, via the phosphorylation and activation of DNM1L. Regulates motility of damaged mitochondria by promoting the ubiquitination and subsequent degradation of MIRO1 and MIRO2; in motor neurons, this likely inhibits mitochondrial intracellular anterograde transport along the axons which probably increases the chance of the mitochondria undergoing mitophagy in the soma. Required for ubiquinone reduction by mitochondrial complex I by mediating phosphorylation of complex I subunit NDUFA10. Phosphorylates LETM1, positively regulating its mitochondrial calcium transport activity. The chain is Serine/threonine-protein kinase PINK1, mitochondrial from Rattus norvegicus (Rat).